The primary structure comprises 342 residues: Glucokinase (342 aa).

15–20 (GDVGGT) serves as a coordination point for ATP.

This sequence belongs to the bacterial glucokinase family.

It localises to the cytoplasm. The catalysed reaction is D-glucose + ATP = D-glucose 6-phosphate + ADP + H(+). This Ralstonia nicotianae (strain ATCC BAA-1114 / GMI1000) (Ralstonia solanacearum) protein is Glucokinase.